The following is a 691-amino-acid chain: Penicillin-binding protein 2D (691 aa).

At 1–19 (MDAMTNKRLRLTLKTVRAF) the chain is on the cytoplasmic side. Residues 20-40 (IFLGAFAALAAAAVFMTVILI) traverse the membrane as a helical; Signal-anchor for type II membrane protein segment. The Extracellular segment spans residues 41–691 (AKYQGAPSVQ…WWDKWLGRHH (651 aa)). Positions 55 to 223 (TILYASDGSK…PSGYSPYVNE (169 aa)) are transglycosylase. The Proton donor; for transglycosylase activity role is filled by glutamate 94. The transpeptidase stretch occupies residues 327 to 605 (VGFSAIDPRT…AKTIWADFME (279 aa)). The active-site Acyl-ester intermediate; for transpeptidase activity is the serine 365. Residues 663–691 (AKQTKDRLPSKEKPASEKKWWDKWLGRHH) are disordered. Residues 664–691 (KQTKDRLPSKEKPASEKKWWDKWLGRHH) are compositionally biased toward basic and acidic residues.

The protein in the N-terminal section; belongs to the glycosyltransferase 51 family. It in the C-terminal section; belongs to the transpeptidase family.

The protein localises to the cell membrane. The catalysed reaction is [GlcNAc-(1-&gt;4)-Mur2Ac(oyl-L-Ala-gamma-D-Glu-L-Lys-D-Ala-D-Ala)](n)-di-trans,octa-cis-undecaprenyl diphosphate + beta-D-GlcNAc-(1-&gt;4)-Mur2Ac(oyl-L-Ala-gamma-D-Glu-L-Lys-D-Ala-D-Ala)-di-trans,octa-cis-undecaprenyl diphosphate = [GlcNAc-(1-&gt;4)-Mur2Ac(oyl-L-Ala-gamma-D-Glu-L-Lys-D-Ala-D-Ala)](n+1)-di-trans,octa-cis-undecaprenyl diphosphate + di-trans,octa-cis-undecaprenyl diphosphate + H(+). The enzyme catalyses Preferential cleavage: (Ac)2-L-Lys-D-Ala-|-D-Ala. Also transpeptidation of peptidyl-alanyl moieties that are N-acyl substituents of D-alanine.. It functions in the pathway cell wall biogenesis; peptidoglycan biosynthesis. Functionally, involved in the polymerization and cross-linking of spore peptidoglycan. May be required for synthesis of the spore germ cell wall, the first layer of peptidoglycan synthesized on the surface of the inner forespore membrane. This chain is Penicillin-binding protein 2D (pbpG), found in Bacillus subtilis (strain 168).